A 360-amino-acid polypeptide reads, in one-letter code: 3-dehydroquinate synthase (360 aa).

Residues Asp71–Lys76, Gly105–Asp109, Thr129–Thr130, Lys142, Lys151, and Thr169–Thr172 contribute to the NAD(+) site. Glu184, His248, and His265 together coordinate Zn(2+).

Belongs to the sugar phosphate cyclases superfamily. Dehydroquinate synthase family. The cofactor is Co(2+). Zn(2+) serves as cofactor. It depends on NAD(+) as a cofactor.

The protein resides in the cytoplasm. It carries out the reaction 7-phospho-2-dehydro-3-deoxy-D-arabino-heptonate = 3-dehydroquinate + phosphate. It participates in metabolic intermediate biosynthesis; chorismate biosynthesis; chorismate from D-erythrose 4-phosphate and phosphoenolpyruvate: step 2/7. Functionally, catalyzes the conversion of 3-deoxy-D-arabino-heptulosonate 7-phosphate (DAHP) to dehydroquinate (DHQ). In Coxiella burnetii (strain CbuK_Q154) (Coxiella burnetii (strain Q154)), this protein is 3-dehydroquinate synthase.